The sequence spans 607 residues: Granule-bound starch synthase 1, chloroplastic/amyloplastic (607 aa).

The N-terminal 77 residues, 1–77, are a transit peptide targeting the chloroplast; that stretch reads MASITASHHF…RPGCSATIVC (77 aa). Lysine 95 is an ADP-alpha-D-glucose binding site. The tract at residues 585–607 is disordered; it reads SGSEPGVEGEEIAPLAKENVATP.

Belongs to the glycosyltransferase 1 family. Bacterial/plant glycogen synthase subfamily.

The protein resides in the plastid. Its subcellular location is the chloroplast. The protein localises to the amyloplast. It carries out the reaction an NDP-alpha-D-glucose + [(1-&gt;4)-alpha-D-glucosyl](n) = [(1-&gt;4)-alpha-D-glucosyl](n+1) + a ribonucleoside 5'-diphosphate + H(+). It participates in glycan biosynthesis; starch biosynthesis. The protein is Granule-bound starch synthase 1, chloroplastic/amyloplastic (WAXY) of Solanum tuberosum (Potato).